The sequence spans 430 residues: Adenylosuccinate synthetase (430 aa).

GTP contacts are provided by residues 13-19 and 41-43; these read GDEGKGK and GHT. Catalysis depends on Asp14, which acts as the Proton acceptor. Mg(2+) is bound by residues Asp14 and Gly41. Residues 14–17, 39–42, Thr130, Arg144, Gln225, Thr240, and Arg304 each bind IMP; these read DEGK and NAGH. The active-site Proton donor is the His42. Residue 300–306 participates in substrate binding; that stretch reads STTGRAR. Residues Arg306, 332 to 334, and 414 to 416 each bind GTP; these read KLD and STG.

This sequence belongs to the adenylosuccinate synthetase family. In terms of assembly, homodimer. Requires Mg(2+) as cofactor.

It localises to the cytoplasm. The enzyme catalyses IMP + L-aspartate + GTP = N(6)-(1,2-dicarboxyethyl)-AMP + GDP + phosphate + 2 H(+). Its pathway is purine metabolism; AMP biosynthesis via de novo pathway; AMP from IMP: step 1/2. In terms of biological role, plays an important role in the de novo pathway of purine nucleotide biosynthesis. Catalyzes the first committed step in the biosynthesis of AMP from IMP. The protein is Adenylosuccinate synthetase of Pseudomonas putida (strain W619).